We begin with the raw amino-acid sequence, 742 residues long: Phosphoribosylformylglycinamidine synthase subunit PurL (742 aa).

His-54 is a catalytic residue. Tyr-57 and Lys-96 together coordinate ATP. A Mg(2+)-binding site is contributed by Glu-98. Substrate is bound by residues 99-102 (SHNH) and Arg-121. The active-site Proton acceptor is His-100. A Mg(2+)-binding site is contributed by Asp-122. The substrate site is built by Gly-225 and Gln-245. A Mg(2+)-binding site is contributed by Asp-273. 317–319 (ESQ) lines the substrate pocket. Residue Gly-537 coordinates ATP. Asn-538 provides a ligand contact to Mg(2+). Ser-540 contributes to the substrate binding site.

This sequence belongs to the FGAMS family. Monomer. Part of the FGAM synthase complex composed of 1 PurL, 1 PurQ and 2 PurS subunits.

It localises to the cytoplasm. It carries out the reaction N(2)-formyl-N(1)-(5-phospho-beta-D-ribosyl)glycinamide + L-glutamine + ATP + H2O = 2-formamido-N(1)-(5-O-phospho-beta-D-ribosyl)acetamidine + L-glutamate + ADP + phosphate + H(+). The enzyme catalyses L-glutamine + H2O = L-glutamate + NH4(+). The protein operates within purine metabolism; IMP biosynthesis via de novo pathway; 5-amino-1-(5-phospho-D-ribosyl)imidazole from N(2)-formyl-N(1)-(5-phospho-D-ribosyl)glycinamide: step 1/2. Its function is as follows. Part of the phosphoribosylformylglycinamidine synthase complex involved in the purines biosynthetic pathway. Catalyzes the ATP-dependent conversion of formylglycinamide ribonucleotide (FGAR) and glutamine to yield formylglycinamidine ribonucleotide (FGAM) and glutamate. The FGAM synthase complex is composed of three subunits. PurQ produces an ammonia molecule by converting glutamine to glutamate. PurL transfers the ammonia molecule to FGAR to form FGAM in an ATP-dependent manner. PurS interacts with PurQ and PurL and is thought to assist in the transfer of the ammonia molecule from PurQ to PurL. The sequence is that of Phosphoribosylformylglycinamidine synthase subunit PurL from Bacillus subtilis (strain 168).